We begin with the raw amino-acid sequence, 613 residues long: MTTENGAVELGSQSLSTEQTPKAAAGDGPSASEKEPSAPATEKDLSPPNAKKDPGAPDPKNNPDPPSLKKDPAKAPGPEKKGDPVPASASSQGPSGEGDGGGGPAEGSEGPPAALPLPTATAEASIQKLDPTQAPSGNQGSGEAKAGKKAAECREAGRRGSPAFLHSPSCPAIISCSEKTLAVKPLSETTDLVFTGVSVTPDPQDPGPVKAGGTNALAEKKKEEAEKASGQAGQAKVQGDTPQRIGFQAVPSERVEVGQALCLTAREEDCFQILDDCPPPPAPFPHRIVELRTGNVNSEFSMNSKEALGGGKFGAVCTCTERATGLKLAAKVIKKQTPKDKEMVLLEIEVMNQLNHRNLIQLYAAIETSHEIILFMEYIEGGELFERIVDEDYHLTEVDTMVFVRQICDGILFMHKMRVLHLDLKPENILCVNTTGHLVKIIDFGLARRYNPNEKLKVNFGTPEFLSPEVVNYDQISDKTDMWSLGVITYMLLSGLSPFLGDDDTETLNNVLSANWYFDEETFEAVSDEAKDFVSNLLTKDQSARMSAEQCLAHPWLNNLAEKAKRCNRRLKSQILLKKYLMKRRWKKNFIAVSAANRFKKISSSGALMALGV.

Positions 1–20 (MTTENGAVELGSQSLSTEQT) are enriched in polar residues. The disordered stretch occupies residues 1–168 (MTTENGAVEL…RGSPAFLHSP (168 aa)). Basic and acidic residues predominate over residues 32 to 55 (SEKEPSAPATEKDLSPPNAKKDPG). A compositionally biased stretch (pro residues) spans 56-66 (APDPKNNPDPP). Residues 67 to 83 (SLKKDPAKAPGPEKKGD) show a composition bias toward basic and acidic residues. The segment covering 95 to 105 (SGEGDGGGGPA) has biased composition (gly residues). Positions 106–122 (EGSEGPPAALPLPTATA) are enriched in low complexity. The segment covering 145 to 158 (KAGKKAAECREAGR) has biased composition (basic and acidic residues). A phosphoserine mark is found at serine 161, serine 167, and serine 169. A disordered region spans residues 219–240 (EKKKEEAEKASGQAGQAKVQGD). One can recognise a Protein kinase domain in the interval 302–557 (MNSKEALGGG…AEQCLAHPWL (256 aa)). Residues 308-316 (LGGGKFGAV) and lysine 331 each bind ATP. The active-site Proton acceptor is aspartate 423. At threonine 462 the chain carries Phosphothreonine. Positions 591–603 (IAVSAANRFKKIS) are calmodulin-binding.

This sequence belongs to the protein kinase superfamily. CAMK Ser/Thr protein kinase family. As to quaternary structure, may interact with centrin.

It localises to the cytoplasm. It carries out the reaction L-seryl-[myosin light chain] + ATP = O-phospho-L-seryl-[myosin light chain] + ADP + H(+). It catalyses the reaction L-threonyl-[myosin light chain] + ATP = O-phospho-L-threonyl-[myosin light chain] + ADP + H(+). Implicated in the level of global muscle contraction and cardiac function. Phosphorylates a specific serine in the N-terminus of a myosin light chain. The protein is Myosin light chain kinase 2, skeletal/cardiac muscle (Mylk2) of Mus musculus (Mouse).